A 343-amino-acid polypeptide reads, in one-letter code: Holliday junction branch migration complex subunit RuvB (343 aa).

Positions 1–178 are large ATPase domain (RuvB-L); the sequence is MNFVQQNREG…FGMILELQFY (178 aa). ATP-binding positions include Leu17, Arg18, Gly59, Lys62, Thr63, Thr64, 125–127, Arg168, Tyr178, and Arg215; that span reads EDY. Thr63 is a Mg(2+) binding site. Residues 179-249 form a small ATPAse domain (RuvB-S) region; it reads TVKELMEIIK…LVEKTMDILE (71 aa). The tract at residues 252–343 is head domain (RuvB-H); sequence KLGLDEMDRK…DESLRKSDES (92 aa). Residues Arg307 and Arg312 each contribute to the DNA site.

Belongs to the RuvB family. Homohexamer. Forms an RuvA(8)-RuvB(12)-Holliday junction (HJ) complex. HJ DNA is sandwiched between 2 RuvA tetramers; dsDNA enters through RuvA and exits via RuvB. An RuvB hexamer assembles on each DNA strand where it exits the tetramer. Each RuvB hexamer is contacted by two RuvA subunits (via domain III) on 2 adjacent RuvB subunits; this complex drives branch migration. In the full resolvosome a probable DNA-RuvA(4)-RuvB(12)-RuvC(2) complex forms which resolves the HJ.

It localises to the cytoplasm. The catalysed reaction is ATP + H2O = ADP + phosphate + H(+). Its function is as follows. The RuvA-RuvB-RuvC complex processes Holliday junction (HJ) DNA during genetic recombination and DNA repair, while the RuvA-RuvB complex plays an important role in the rescue of blocked DNA replication forks via replication fork reversal (RFR). RuvA specifically binds to HJ cruciform DNA, conferring on it an open structure. The RuvB hexamer acts as an ATP-dependent pump, pulling dsDNA into and through the RuvAB complex. RuvB forms 2 homohexamers on either side of HJ DNA bound by 1 or 2 RuvA tetramers; 4 subunits per hexamer contact DNA at a time. Coordinated motions by a converter formed by DNA-disengaged RuvB subunits stimulates ATP hydrolysis and nucleotide exchange. Immobilization of the converter enables RuvB to convert the ATP-contained energy into a lever motion, pulling 2 nucleotides of DNA out of the RuvA tetramer per ATP hydrolyzed, thus driving DNA branch migration. The RuvB motors rotate together with the DNA substrate, which together with the progressing nucleotide cycle form the mechanistic basis for DNA recombination by continuous HJ branch migration. Branch migration allows RuvC to scan DNA until it finds its consensus sequence, where it cleaves and resolves cruciform DNA. This is Holliday junction branch migration complex subunit RuvB from Pseudothermotoga lettingae (strain ATCC BAA-301 / DSM 14385 / NBRC 107922 / TMO) (Thermotoga lettingae).